Reading from the N-terminus, the 565-residue chain is Proline--tRNA ligase (565 aa).

Belongs to the class-II aminoacyl-tRNA synthetase family. ProS type 1 subfamily. In terms of assembly, homodimer.

It is found in the cytoplasm. The catalysed reaction is tRNA(Pro) + L-proline + ATP = L-prolyl-tRNA(Pro) + AMP + diphosphate. Functionally, catalyzes the attachment of proline to tRNA(Pro) in a two-step reaction: proline is first activated by ATP to form Pro-AMP and then transferred to the acceptor end of tRNA(Pro). As ProRS can inadvertently accommodate and process non-cognate amino acids such as alanine and cysteine, to avoid such errors it has two additional distinct editing activities against alanine. One activity is designated as 'pretransfer' editing and involves the tRNA(Pro)-independent hydrolysis of activated Ala-AMP. The other activity is designated 'posttransfer' editing and involves deacylation of mischarged Ala-tRNA(Pro). The misacylated Cys-tRNA(Pro) is not edited by ProRS. The protein is Proline--tRNA ligase of Campylobacter lari (strain RM2100 / D67 / ATCC BAA-1060).